We begin with the raw amino-acid sequence, 390 residues long: Bibenzyl synthase (390 aa).

Cys164 is a catalytic residue.

Belongs to the thiolase-like superfamily. Chalcone/stilbene synthases family.

It carries out the reaction 3-(3-hydroxyphenyl)-propanoyl-CoA + 3 malonyl-CoA + 3 H(+) = 3,3',5-trihydroxybibenzyl + 4 CO2 + 4 CoA. The polypeptide is Bibenzyl synthase (BIBSY212) (Phalaenopsis sp. (Moth orchid)).